A 450-amino-acid chain; its full sequence is MKATKTTYKKDPMGLTPSQIVNELNRFIVGQEKAKKAVAIALRNRCRRKRVEGNLRNEIVPKNILMIGSTGVGKTEIARRLAKLTNSPFYKIEATKFTEVGYVGRDVESIIRDLVEIAVNTEKTLAKTKVDIHAREKAIERILDSLVGKTSSSETREKFKEKILNGELDDTEIEISVADTTPVGGGSFEIPGMPGASMGVLNLGDMIGRALGSSKTKTKKMLVKDAMAIIIPEESEKLIDQEKIIQQAINLAENDGIVFIDEIDKIASTGSSGAKNAEISREGVQRDLLPLIEGTTVNTKYGPVKTDHILFIASGAFHIAKPSDLLPELQGRLPIRVELNSLTKDDMIKILLEPETSLIKQYSALIGTEDVRLEFAASAIEKIADYAITVNLEVEDIGARRLHTILENLLEDISFEASEMKGKKITIDDKFVENQLSKIITNLDLAKFVL.

ATP-binding positions include valine 29, 71-76, aspartate 261, glutamate 328, and arginine 400; that span reads GVGKTE.

It belongs to the ClpX chaperone family. HslU subfamily. In terms of assembly, a double ring-shaped homohexamer of HslV is capped on each side by a ring-shaped HslU homohexamer. The assembly of the HslU/HslV complex is dependent on binding of ATP.

The protein resides in the cytoplasm. Its function is as follows. ATPase subunit of a proteasome-like degradation complex; this subunit has chaperone activity. The binding of ATP and its subsequent hydrolysis by HslU are essential for unfolding of protein substrates subsequently hydrolyzed by HslV. HslU recognizes the N-terminal part of its protein substrates and unfolds these before they are guided to HslV for hydrolysis. The chain is ATP-dependent protease ATPase subunit HslU from Rickettsia peacockii (strain Rustic).